The primary structure comprises 1621 residues: Cilia- and flagella-associated protein 43 (1621 aa).

8 WD repeats span residues 97–138 (GAQL…PLCS), 141–180 (DSQT…NQYQ), 293–330 (LLEG…VKLE), 334–373 (NAQE…ETYK), 377–417 (VYSR…SVSS), 464–503 (LYCV…SFQV), 634–673 (GSQL…TMAQ), and 679–721 (YHNG…SSRL). Coiled coils occupy residues 792–812 (IKRK…AEKE), 850–870 (TEEQ…VRQE), 1026–1046 (CRQK…IQEI), 1098–1118 (VEEA…ALDD), 1150–1177 (TEEE…YSKE), 1362–1389 (DEKM…FQLD), 1451–1514 (IFQL…QEKQ), and 1591–1611 (AKIQ…LRMK).

Belongs to the CFAP43 family.

The protein localises to the cytoplasm. It localises to the cytoskeleton. It is found in the cilium axoneme. In terms of biological role, involved in the regulation of the beating frequency of motile cilia in multiciliated cells of the larval epidermis. The chain is Cilia- and flagella-associated protein 43 (cfap43) from Xenopus laevis (African clawed frog).